The primary structure comprises 80 residues: Dolichol-phosphate mannose synthase subunit 2 (80 aa).

2 helical membrane-spanning segments follow: residues 10-30 and 50-70; these read LLLS…VIIL and ILVP…FIGM.

This sequence belongs to the DPM2 family. Component of the dolichol-phosphate mannose (DPM) synthase complex composed of DPMS1, DPMS2 and DPMS3; in the complex interacts directly with DPMS3. Associates with the GPI-GlcNAc transferase (GPI-GnT) complex.

The protein resides in the endoplasmic reticulum membrane. Its pathway is protein modification; protein glycosylation. Regulates the biosynthesis of dolichol phosphate-mannose. Regulatory subunit of the dolichol-phosphate mannose (DPM) synthase complex; essential for the ER localization and stable expression of DPMS1. The chain is Dolichol-phosphate mannose synthase subunit 2 from Arabidopsis thaliana (Mouse-ear cress).